A 227-amino-acid chain; its full sequence is Brain acid soluble protein 1 (227 aa).

Basic residues predominate over residues 1-11 (MGGKLSKKKKG). A disordered region spans residues 1 to 227 (MGGKLSKKKK…NSDQTVAVKE (227 aa)). A lipid anchor (N-myristoyl glycine) is attached at G2. Positions 15–27 (NDEKAKDKDKKAE) are enriched in basic and acidic residues. K25 participates in a covalent cross-link: Glycyl lysine isopeptide (Lys-Gly) (interchain with G-Cter in SUMO2). T31 and T36 each carry phosphothreonine. Composition is skewed to basic and acidic residues over residues 49–107 (PEVK…KDAE) and 137–150 (TKDD…DATK). Residues K87 and K99 each participate in a glycyl lysine isopeptide (Lys-Gly) (interchain with G-Cter in SUMO2) cross-link. Residues 151-161 (TEAPAAPAAQE) are compositionally biased toward low complexity. Residue K163 forms a Glycyl lysine isopeptide (Lys-Gly) (interchain with G-Cter in SUMO2) linkage. Phosphoserine is present on residues S164, S170, S172, S176, and S195. Residues 172-185 (SKPSSTEAAPSSKE) are compositionally biased toward polar residues. Phosphothreonine is present on T196. Polar residues predominate over residues 216 to 227 (AANSDQTVAVKE). S219 carries the post-translational modification Phosphoserine.

It belongs to the BASP1 family. Brain.

Its subcellular location is the cell membrane. The protein localises to the cell projection. It localises to the growth cone. The chain is Brain acid soluble protein 1 (BASP1) from Bos taurus (Bovine).